The chain runs to 428 residues: Adenylosuccinate synthetase (428 aa).

Residues 12–18 (GDEGKGK) and 40–42 (GHT) each bind GTP. The active-site Proton acceptor is Asp-13. Mg(2+) is bound by residues Asp-13 and Gly-40. Residues 13-16 (DEGK), 38-41 (NAGH), Thr-128, Arg-142, Gln-223, Thr-238, and Arg-302 contribute to the IMP site. His-41 functions as the Proton donor in the catalytic mechanism. 298-304 (TTTGRPR) contributes to the substrate binding site. Residues Arg-304, 330-332 (KLD), and 412-414 (SVG) contribute to the GTP site.

Belongs to the adenylosuccinate synthetase family. Homodimer. The cofactor is Mg(2+).

The protein localises to the cytoplasm. The enzyme catalyses IMP + L-aspartate + GTP = N(6)-(1,2-dicarboxyethyl)-AMP + GDP + phosphate + 2 H(+). The protein operates within purine metabolism; AMP biosynthesis via de novo pathway; AMP from IMP: step 1/2. Its function is as follows. Plays an important role in the de novo pathway of purine nucleotide biosynthesis. Catalyzes the first committed step in the biosynthesis of AMP from IMP. The sequence is that of Adenylosuccinate synthetase from Desulforamulus reducens (strain ATCC BAA-1160 / DSM 100696 / MI-1) (Desulfotomaculum reducens).